The chain runs to 444 residues: Trigger factor (444 aa).

Positions 166 to 251 constitute a PPIase FKBP-type domain; that stretch reads GDQVVIDFKG…VKAVKAPKAA (86 aa).

The protein belongs to the FKBP-type PPIase family. Tig subfamily.

The protein resides in the cytoplasm. The catalysed reaction is [protein]-peptidylproline (omega=180) = [protein]-peptidylproline (omega=0). In terms of biological role, involved in protein export. Acts as a chaperone by maintaining the newly synthesized protein in an open conformation. Functions as a peptidyl-prolyl cis-trans isomerase. The protein is Trigger factor of Cereibacter sphaeroides (strain KD131 / KCTC 12085) (Rhodobacter sphaeroides).